We begin with the raw amino-acid sequence, 250 residues long: Probable transcriptional regulatory protein PERMA_0079 (250 aa).

This sequence belongs to the TACO1 family.

Its subcellular location is the cytoplasm. In Persephonella marina (strain DSM 14350 / EX-H1), this protein is Probable transcriptional regulatory protein PERMA_0079.